An 81-amino-acid chain; its full sequence is MSHSVKIYDTCIGCTQCVRACPTDVLEMIPWDGCKAKQIASAPRTEDCVGCKRCESACPTDFLSVRVSLWNETTRSMGLAY.

2 consecutive 4Fe-4S ferredoxin-type domains span residues 2 to 31 and 39 to 68; these read SHSVKIYDTCIGCTQCVRACPTDVLEMIPW and IASAPRTEDCVGCKRCESACPTDFLSVRVS. [4Fe-4S] cluster is bound by residues Cys-11, Cys-14, Cys-17, Cys-21, Cys-48, Cys-51, Cys-54, and Cys-58.

The eukaryotic PSI reaction center is composed of at least 11 subunits. [4Fe-4S] cluster serves as cofactor.

The protein resides in the plastid. Its subcellular location is the chloroplast thylakoid membrane. It carries out the reaction reduced [plastocyanin] + hnu + oxidized [2Fe-2S]-[ferredoxin] = oxidized [plastocyanin] + reduced [2Fe-2S]-[ferredoxin]. Apoprotein for the two 4Fe-4S centers FA and FB of photosystem I (PSI); essential for photochemical activity. FB is the terminal electron acceptor of PSI, donating electrons to ferredoxin. The C-terminus interacts with PsaA/B/D and helps assemble the protein into the PSI complex. Required for binding of PsaD and PsaE to PSI. PSI is a plastocyanin-ferredoxin oxidoreductase, converting photonic excitation into a charge separation, which transfers an electron from the donor P700 chlorophyll pair to the spectroscopically characterized acceptors A0, A1, FX, FA and FB in turn. The chain is Photosystem I iron-sulfur center from Daucus carota (Wild carrot).